We begin with the raw amino-acid sequence, 346 residues long: Small ribosomal subunit biogenesis GTPase RsgA (346 aa).

Positions methionine 1–histidine 25 are disordered. A compositionally biased stretch (polar residues) spans threonine 7–lysine 20. One can recognise a CP-type G domain in the interval glutamate 103–phenylalanine 271. GTP contacts are provided by residues asparagine 159 to aspartate 162 and glycine 213 to serine 221. Zn(2+) is bound by residues cysteine 295, cysteine 300, histidine 302, and cysteine 308.

The protein belongs to the TRAFAC class YlqF/YawG GTPase family. RsgA subfamily. In terms of assembly, monomer. Associates with 30S ribosomal subunit, binds 16S rRNA. Zn(2+) is required as a cofactor.

The protein resides in the cytoplasm. Functionally, one of several proteins that assist in the late maturation steps of the functional core of the 30S ribosomal subunit. Helps release RbfA from mature subunits. May play a role in the assembly of ribosomal proteins into the subunit. Circularly permuted GTPase that catalyzes slow GTP hydrolysis, GTPase activity is stimulated by the 30S ribosomal subunit. The polypeptide is Small ribosomal subunit biogenesis GTPase RsgA (Haemophilus influenzae (strain ATCC 51907 / DSM 11121 / KW20 / Rd)).